Consider the following 112-residue polypeptide: DNA-directed RNA polymerase subunit Rpo11 (112 aa).

It belongs to the archaeal Rpo11/eukaryotic RPB11/RPC19 RNA polymerase subunit family. Part of the RNA polymerase complex.

The protein localises to the cytoplasm. It carries out the reaction RNA(n) + a ribonucleoside 5'-triphosphate = RNA(n+1) + diphosphate. Functionally, DNA-dependent RNA polymerase (RNAP) catalyzes the transcription of DNA into RNA using the four ribonucleoside triphosphates as substrates. The sequence is that of DNA-directed RNA polymerase subunit Rpo11 from Methanopyrus kandleri (strain AV19 / DSM 6324 / JCM 9639 / NBRC 100938).